Here is a 295-residue protein sequence, read N- to C-terminus: Alpha-soluble NSF attachment protein (295 aa).

At methionine 1 the chain carries N-acetylmethionine. Residues serine 26, serine 29, and serine 195 each carry the phosphoserine modification.

It belongs to the SNAP family. In terms of assembly, interacts with PRKCABP, and disrupts the interaction between GRIA2 and PRKCABP, leading to the internalization of GRIA2. Found in a complex with VAMP8. Component of a SNARE-like complex that contains at least ZW10, USE1L, RINT1, STX18 and NAPA/SNAP-alpha. Interacts with VTI1A. Interacts with STX12. Interacts with GNA12 (via N-terminus); the interaction promotes CDH5 localization to plasma membrane.

Its subcellular location is the cell membrane. Functionally, required for vesicular transport between the endoplasmic reticulum and the Golgi apparatus. Together with GNA12 promotes CDH5 localization to plasma membrane. This chain is Alpha-soluble NSF attachment protein (Napa), found in Mus musculus (Mouse).